We begin with the raw amino-acid sequence, 327 residues long: Vacuolar protein sorting-associated protein 26A (327 aa).

Positions 306–327 (RTNFHQRFESPESQASAEQPEM) are disordered. Ser-315 is subject to Phosphoserine. A compositionally biased stretch (polar residues) spans 316 to 327 (PESQASAEQPEM).

This sequence belongs to the VPS26 family. Component of the heterotrimeric retromer cargo-selective complex (CSC), also described as vacuolar protein sorting subcomplex (VPS), formed by VPS26 (VPS26A or VPS26B), VPS29 and VPS35. The CSC has a highly elongated structure with VPS26 and VPS29 binding independently at opposite distal ends of VPS35 as central platform. The CSC is believed to associate with variable sorting nexins to form functionally distinct retromer complex variants. The originally described retromer complex (also called SNX-BAR retromer) is a pentamer containing the CSC and a heterodimeric membrane-deforming subcomplex formed between SNX1 or SNX2 and SNX5 or SNX6 (also called SNX-BAR subcomplex); the respective CSC and SNX-BAR subcomplexes associate with low affinity. The CSC associates with SNX3 to form a SNX3-retromer complex. The CSC associates with SNX27, the WASH complex and the SNX-BAR subcomplex to form the SNX27-retromer complex. Interacts with VPS29, VPS35, SNX27, SNX1, SNX2, SNX5, SNX6, SNX3, RAB7A, ECPAS, EHD1, WASHC5, SORL1.

It is found in the cytoplasm. The protein localises to the endosome membrane. Its subcellular location is the early endosome. Functionally, acts as a component of the retromer cargo-selective complex (CSC). The CSC is believed to be the core functional component of retromer or respective retromer complex variants acting to prevent missorting of selected transmembrane cargo proteins into the lysosomal degradation pathway. The recruitment of the CSC to the endosomal membrane involves RAB7A and SNX3. The SNX-BAR retromer mediates retrograde transport of cargo proteins from endosomes to the trans-Golgi network (TGN) and is involved in endosome-to-plasma membrane transport for cargo protein recycling. The SNX3-retromer mediates the retrograde endosome-to-TGN transport of WLS distinct from the SNX-BAR retromer pathway. The SNX27-retromer is believed to be involved in endosome-to-plasma membrane trafficking and recycling of a broad spectrum of cargo proteins. The CSC complex seems to act as recruitment hub for other proteins, such as the WASH complex and TBC1D5. Required for retrograde transport of lysosomal enzyme receptor IGF2R. Required to regulate transcytosis of the polymeric immunoglobulin receptor (pIgR-pIgA). Required for the endosomal localization of WASHC2 (indicative for the WASH complex). Required for the endosomal localization of TBC1D5. Mediates retromer cargo recognition of SORL1 and is involved in trafficking of SORL1 implicated in sorting and processing of APP. Involved in retromer-independent lysosomal sorting of F2R. Involved in recycling of ADRB2. Acts redundantly with VSP26B in SNX-27 mediated endocytic recycling of SLC2A1/GLUT1. Enhances the affinity of SNX27 for PDZ-binding motifs in cargo proteins. This Bos taurus (Bovine) protein is Vacuolar protein sorting-associated protein 26A (VPS26A).